We begin with the raw amino-acid sequence, 85 residues long: Cell division topological specificity factor (85 aa).

Belongs to the MinE family.

Functionally, prevents the cell division inhibition by proteins MinC and MinD at internal division sites while permitting inhibition at polar sites. This ensures cell division at the proper site by restricting the formation of a division septum at the midpoint of the long axis of the cell. In Xanthomonas campestris pv. campestris (strain 8004), this protein is Cell division topological specificity factor.